We begin with the raw amino-acid sequence, 272 residues long: HTH-type transcriptional repressor AllR (272 aa).

A disordered region spans residues 1–20; it reads MTEVRRRGRPGQAEPTAQKG. Residues 21 to 83 form the HTH iclR-type domain; sequence AQALERGIAI…SQLGWWHIGL (63 aa). Positions 43 to 62 form a DNA-binding region, H-T-H motif; that stretch reads VSDISGSLDLPLSTTFRLLK. Residues 98–267 form the IclR-ED domain; the sequence is VLSVAGPFMH…AKDISTALGL (170 aa). Glyoxylate contacts are provided by residues 154 to 156, D207, C217, and 234 to 236; these read SGA and SIS.

In terms of biological role, negative regulator of allantoin and glyoxylate utilization operons. Binds to the gcl promoter and to the allS-allA intergenic region. This is HTH-type transcriptional repressor AllR (allR) from Salmonella typhi.